Reading from the N-terminus, the 1358-residue chain is DNA-directed RNA polymerase subunit beta (1358 aa).

The segment covering 1033-1051 (QGLEDRKKEHEARFDDKKG) has biased composition (basic and acidic residues). The tract at residues 1033-1053 (QGLEDRKKEHEARFDDKKGKL) is disordered.

Belongs to the RNA polymerase beta chain family. In terms of assembly, the RNAP catalytic core consists of 2 alpha, 1 beta, 1 beta' and 1 omega subunit. When a sigma factor is associated with the core the holoenzyme is formed, which can initiate transcription.

It catalyses the reaction RNA(n) + a ribonucleoside 5'-triphosphate = RNA(n+1) + diphosphate. DNA-dependent RNA polymerase catalyzes the transcription of DNA into RNA using the four ribonucleoside triphosphates as substrates. The polypeptide is DNA-directed RNA polymerase subunit beta (Marinobacter nauticus (strain ATCC 700491 / DSM 11845 / VT8) (Marinobacter aquaeolei)).